Consider the following 331-residue polypeptide: Dof zinc finger protein DOF1.1 (331 aa).

A Dof-type zinc finger spans residues 77-131; it reads LKCPRCDSSNTKFCYYNNYNLTQPRHFCKGCRRYWTQGGALRNVPVGGGCRRNNK. Zn(2+) contacts are provided by Cys-79, Cys-82, Cys-104, and Cys-107. 2 disordered regions span residues 121–166 and 291–331; these read PVGG…TNHQ and EEQP…NDLL. Over residues 135-160 the composition is skewed to low complexity; it reads NGNLKSSSSSSKQSSSVNAQSPSSGQ. Residues 305-316 are compositionally biased toward polar residues; that stretch reads GLTSPGNQTNQY.

Interacts with OBF4. In terms of tissue distribution, expressed in the vasculature (mainly in the phloem and associated cell files) of cotyledons, leaves, roots, flower stalks and petals. The PEAR proteins (e.g. DOF2.4, DOF5.1, DOF3.2, DOF1.1, DOF5.6 and DOF5.3) form a short-range concentration gradient that peaks at protophloem sieve elements (PSE).

It localises to the nucleus. Its function is as follows. Transcription factor that binds specifically to a 5'-AA[AG]G-3' consensus core sequence. Enhances the DNA binding of OBF transcription factors to OCS elements. Involved in the regulation of root development. The PEAR proteins (e.g. DOF2.4, DOF5.1, DOF3.2, DOF1.1, DOF5.6 and DOF5.3) activate gene expression that promotes radial growth of protophloem sieve elements. Element of a regulatory network controlling indole glucosinolates (IGS) biosynthesis, probably by inducing the expression of accurate genes (e.g. CYP83B1). Promotes apical dominance. This chain is Dof zinc finger protein DOF1.1, found in Arabidopsis thaliana (Mouse-ear cress).